Here is a 664-residue protein sequence, read N- to C-terminus: Lamin tail domain-containing protein 2 (664 aa).

The segment at 1-40 (MAPKSCQESEDKQVSPAPAGVQPDSSDLGSPVGTPVDRVA) is disordered. Positions 118-169 (QDKFLRNQVQKLTLELKAQKEQAQQEKQQLEEKLQQNLWAKQQLEAELQTFQ) form a coiled coil. Residues 245 to 260 (SDQKQSQPPTSETYTL) show a composition bias toward polar residues. Disordered stretches follow at residues 245–272 (SDQK…TEKP) and 286–329 (TSSS…MQEH). Low complexity predominate over residues 286–298 (TSSSERTQSDTSS). The span at 312-325 (GHPSQGTNLASSEQ) shows a compositional bias: polar residues. Residues 362–481 (PYTRPQLNPF…QVLSEHQATP (120 aa)) enclose the LTD domain. Positions 504 to 563 (SESEPDVHPGEQQCRPSSPQKGRAKDAGARRKKPGPGVRQHRHSSTSGLRASRTLHPTET) are disordered. The span at 533–547 (RRKKPGPGVRQHRHS) shows a compositional bias: basic residues.

The protein is Lamin tail domain-containing protein 2 (Lmntd2) of Mus musculus (Mouse).